Consider the following 102-residue polypeptide: NADH-quinone oxidoreductase subunit K (102 aa).

Helical transmembrane passes span 6–26, 30–50, and 62–82; these read FEHA…ALLI, LIVM…AFIA, and VMFL…LGLG.

It belongs to the complex I subunit 4L family. In terms of assembly, NDH-1 is composed of 14 different subunits. Subunits NuoA, H, J, K, L, M, N constitute the membrane sector of the complex.

It localises to the cell inner membrane. The enzyme catalyses a quinone + NADH + 5 H(+)(in) = a quinol + NAD(+) + 4 H(+)(out). In terms of biological role, NDH-1 shuttles electrons from NADH, via FMN and iron-sulfur (Fe-S) centers, to quinones in the respiratory chain. The immediate electron acceptor for the enzyme in this species is believed to be ubiquinone. Couples the redox reaction to proton translocation (for every two electrons transferred, four hydrogen ions are translocated across the cytoplasmic membrane), and thus conserves the redox energy in a proton gradient. This Methylococcus capsulatus (strain ATCC 33009 / NCIMB 11132 / Bath) protein is NADH-quinone oxidoreductase subunit K.